The chain runs to 499 residues: NAD(P)H-quinone oxidoreductase chain 4, chloroplastic (499 aa).

14 consecutive transmembrane segments (helical) span residues 4 to 24, 31 to 51, 87 to 107, 113 to 133, 134 to 154, 167 to 187, 211 to 231, 242 to 262, 274 to 294, 310 to 330, 331 to 351, 385 to 405, 416 to 436, and 462 to 482; these read FPWL…IPFL, IIRW…TYIF, IGLI…AWPV, LFYF…ASQD, ILLF…LLAM, FILY…IMAF, IIIY…IPFH, HYST…YGLI, SFFA…AALT, VSHM…GLNG, AILQ…LAGI, SLAL…LGVI, IIII…LLSM, and IFIL…PNFV.

This sequence belongs to the complex I subunit 4 family.

The protein resides in the plastid. It localises to the chloroplast thylakoid membrane. The enzyme catalyses a plastoquinone + NADH + (n+1) H(+)(in) = a plastoquinol + NAD(+) + n H(+)(out). It carries out the reaction a plastoquinone + NADPH + (n+1) H(+)(in) = a plastoquinol + NADP(+) + n H(+)(out). This Marchantia polymorpha (Common liverwort) protein is NAD(P)H-quinone oxidoreductase chain 4, chloroplastic (ndhD).